A 589-amino-acid chain; its full sequence is C-type lectin domain family 4 member F (589 aa).

The Cytoplasmic portion of the chain corresponds to M1 to Q39. A helical; Signal-anchor for type II membrane protein transmembrane segment spans residues A40–V60. Residues Q61–N589 are Extracellular-facing. N-linked (GlcNAc...) asparagine glycosylation is found at N79, N113, N207, N230, N244, N312, N385, and N399. The C-type lectin domain maps to N476 to N589.

The protein localises to the membrane. Functionally, receptor with an affinity for galactose and fucose. Could be involved in endocytosis. The protein is C-type lectin domain family 4 member F (CLEC4F) of Homo sapiens (Human).